Reading from the N-terminus, the 474-residue chain is MNNFGEDFIFGGATAAYQAEGATKEDGKGPCIWDEYLKKEGRFTGDTASDFYHKYKEDLKFSRKFGVNGIRISIAWSRVIPDGKGEVNPKGLKFYSDLIDECIKNNVEPFVTLHHFDTPLTLFKDGDWLNRNNIDYFVRFAKVCFEALGDRVKKWITFNEAWAVAQNGYIIGNFPPSIKYDIPKAAQSMHNMMVAHAKVVELYKSMNLDGEIGIVHTLEGKYPITDSKEDKEAAYLDYMISNKFMLDACFKGEYPKETEKTINEIMSKNGGELKIYDGDLEVLKKASSKIDFLGMNYYSSHFLKAYEGESRIHHNGTGEKGTSIFALKGIGERVNNPEVPTTDWDWPIYPKGLHDMLVRIKNEYPNYKKIYVTENGMGYKDDFKDGKIDDTPRIDYINKHLEAILKAKNEGVVVKGYFVWSLMDVLSWSNGYNKRYGLFYVDFKTQNRYAKKSAYWFKRISYEKKLIDFSDIEY.

D-galactose 6-phosphate is bound by residues Q18, H115, N159, E160, and N296. E160 serves as the catalytic Proton donor. Catalysis depends on E374, which acts as the Nucleophile. Residues S427, W428, K434, and Y436 each coordinate D-galactose 6-phosphate.

It belongs to the glycosyl hydrolase 1 family.

It catalyses the reaction a 6-phospho-beta-D-galactoside + H2O = D-galactose 6-phosphate + an alcohol. It participates in carbohydrate metabolism; lactose degradation; D-galactose 6-phosphate and beta-D-glucose from lactose 6-phosphate: step 1/1. This is 6-phospho-beta-galactosidase from Clostridium acetobutylicum (strain ATCC 824 / DSM 792 / JCM 1419 / IAM 19013 / LMG 5710 / NBRC 13948 / NRRL B-527 / VKM B-1787 / 2291 / W).